Consider the following 351-residue polypeptide: Phosphate acyltransferase (351 aa).

The protein belongs to the PlsX family. Homodimer. Probably interacts with PlsY.

The protein localises to the cytoplasm. It carries out the reaction a fatty acyl-[ACP] + phosphate = an acyl phosphate + holo-[ACP]. It functions in the pathway lipid metabolism; phospholipid metabolism. Its function is as follows. Catalyzes the reversible formation of acyl-phosphate (acyl-PO(4)) from acyl-[acyl-carrier-protein] (acyl-ACP). This enzyme utilizes acyl-ACP as fatty acyl donor, but not acyl-CoA. This is Phosphate acyltransferase from Verminephrobacter eiseniae (strain EF01-2).